The chain runs to 357 residues: Glutamine synthetase root isozyme B (357 aa).

The region spanning 19 to 99 is the GS beta-grasp domain; sequence IIAEYIWVGG…VICDVYTPAG (81 aa). The region spanning 106–357 is the GS catalytic domain; sequence KRYNAAKIFS…AETTILWKKS (252 aa).

It belongs to the glutamine synthetase family. Homooctamer.

The protein resides in the cytoplasm. It catalyses the reaction L-glutamate + NH4(+) + ATP = L-glutamine + ADP + phosphate + H(+). The polypeptide is Glutamine synthetase root isozyme B (GS3B) (Pisum sativum (Garden pea)).